Reading from the N-terminus, the 73-residue chain is Cell division protein ZapB (73 aa).

The stretch at 3–66 (LELLSKLETK…SWNEKVTGLV (64 aa)) forms a coiled coil.

It belongs to the ZapB family. Homodimer. The ends of the coiled-coil dimer bind to each other, forming polymers. Interacts with FtsZ.

It is found in the cytoplasm. Its function is as follows. Non-essential, abundant cell division factor that is required for proper Z-ring formation. It is recruited early to the divisome by direct interaction with FtsZ, stimulating Z-ring assembly and thereby promoting cell division earlier in the cell cycle. Its recruitment to the Z-ring requires functional FtsA or ZipA. This chain is Cell division protein ZapB, found in Shewanella baltica (strain OS223).